A 410-amino-acid polypeptide reads, in one-letter code: E3 SUMO-protein ligase EGR2 (410 aa).

Positions 68-83 (PPASTTASSSVTSASP) are enriched in low complexity. 3 disordered regions span residues 68-95 (PPAS…GVCT), 101-120 (PELD…SGCT), and 127-151 (PSAF…SYPS). The short motif at 104-107 (DHLY) is the HCFC1-binding-motif (HBM) element. Residues 127 to 143 (PSAFLSPPTTSTSSLAY) are compositionally biased toward low complexity. The residue at position 188 (Lys188) is an N6-acetyllysine. Residues 217-286 (PSAGVTGPGA…PYPCPAEGCD (70 aa)) are disordered. Gly residues predominate over residues 222–231 (TGPGASGGSE). Polar residues predominate over residues 237–248 (GSGSAAVTTSPY). 3 consecutive C2H2-type zinc fingers follow at residues 278–302 (YPCP…IRIH), 308–330 (FQCR…IRTH), and 336–358 (FACD…TKIH). Residues 349–410 (DERKRHTKIH…LACTSRTRTP (62 aa)) form a disordered region. Residues 353–363 (RHTKIHLRQKE) are compositionally biased toward basic residues. A compositionally biased stretch (low complexity) spans 367–380 (SAPSSSASAQPSAS).

This sequence belongs to the EGR C2H2-type zinc-finger protein family. Interacts with HCFC1. Interacts with WWP2. Interacts with UBC9. Interacts with CITED1. Interacts (via phosphorylated form) with SFN. In terms of processing, ubiquitinated by WWP2 leading to proteasomal degradation. Acetylated. May be deacetylated by HDAC6, HDAC10 or SIRT1.

The protein localises to the nucleus. Its pathway is protein modification; protein sumoylation. Its function is as follows. Sequence-specific DNA-binding transcription factor. Plays a role in hindbrain segmentation by regulating the expression of a subset of homeobox containing genes and in Schwann cell myelination by regulating the expression of genes involved in the formation and maintenance of myelin. Binds to two EGR2-consensus sites EGR2A (5'-CTGTAGGAG-3') and EGR2B (5'-ATGTAGGTG-3') in the HOXB3 enhancer and promotes HOXB3 transcriptional activation. Binds to specific DNA sites located in the promoter region of HOXA4, HOXB2 and ERBB2. Regulates hindbrain segmentation by controlling the expression of Hox genes, such as HOXA4, HOXB3 and HOXB2, and thereby specifying odd and even rhombomeres. Promotes the expression of HOXB3 in the rhombomere r5 in the hindbrain. Regulates myelination in the peripheral nervous system after birth, possibly by regulating the expression of myelin proteins, such as MPZ, and by promoting the differentiation of Schwann cells. Involved in the development of the jaw openener musculature, probably by playing a role in its innervation through trigeminal motor neurons. May play a role in adipogenesis, possibly by regulating the expression of CEBPB. In terms of biological role, E3 SUMO-protein ligase helping SUMO1 conjugation to its coregulators NAB1 and NAB2, whose sumoylation down-regulates EGR2 transcriptional activity. This chain is E3 SUMO-protein ligase EGR2 (EGR2), found in Cricetulus griseus (Chinese hamster).